A 340-amino-acid chain; its full sequence is VPNAQPALEGRTSFPEDTVVTYKCEESFMKIPGKKDSVICLKGSQWSDIEEFCNRSCEVPTRLNFASLKQPYITQNYFPVGTTVEYVCRPGYRRELSLSTKLTCLQNLTWSTAVEFCKKKSCPNPGEIRNGQIDVSNGILFGATISFSCNTGYKLFGPTSSLCLISGSSVQWSDPLPECREIYCPAPPQIDNGIIQGKRDHYGYRQSITYACNKGYTMIGEHSIYCTVNDDEGEWSGPPPECRGKSLTSKVPPTVQKPTTVNVPTTEVSPTSQKTTTKTTTPNAQATRSTPVSRTTKHFHETTPNKGSGTTSGTTSLLSGHKCFTLTGLLGTLVTMGLLT.

Sushi domains are found at residues Val1–Arg55, Ser56–Lys119, Lys120–Glu181, and Ile182–Gly244. Cys24 and Cys53 are disulfide-bonded. Asn54 carries N-linked (GlcNAc...) asparagine glycosylation. Disulfide bonds link Cys57-Cys104, Cys88-Cys117, Cys122-Cys163, Cys149-Cys179, Cys184-Cys226, and Cys212-Cys242. Asn107 is a glycosylation site (N-linked (GlcNAc...) asparagine). Residues Trp235–Leu317 are disordered. A compositionally biased stretch (polar residues) spans Ser246–Val268. Low complexity-rich tracts occupy residues Ser269–Thr287 and Gly307–Leu317. A lipid anchor (GPI-anchor amidated serine) is attached at Ser312. A propeptide spans Gly313 to Thr340 (removed in mature form).

Belongs to the receptors of complement activation (RCA) family. In terms of assembly, monomer (major form) and non-disulfide-linked, covalent homodimer (minor form). Interacts with ADGRE5. Post-translationally, the Ser/Thr-rich domain is heavily O-glycosylated.

The protein localises to the cell membrane. This protein recognizes C4b and C3b fragments that condense with cell-surface hydroxyl or amino groups when nascent C4b and C3b are locally generated during C4 and c3 activation. Interaction of daf with cell-associated C4b and C3b polypeptides interferes with their ability to catalyze the conversion of C2 and factor B to enzymatically active C2a and Bb and thereby prevents the formation of C4b2a and C3bBb, the amplification convertases of the complement cascade. Inhibits complement activation by destabilizing and preventing the formation of C3 and C5 convertases, which prevents complement damage. This is Complement decay-accelerating factor (CD55) from Pongo pygmaeus (Bornean orangutan).